The following is a 296-amino-acid chain: ATP synthase gamma chain (296 aa).

This sequence belongs to the ATPase gamma chain family. In terms of assembly, F-type ATPases have 2 components, CF(1) - the catalytic core - and CF(0) - the membrane proton channel. CF(1) has five subunits: alpha(3), beta(3), gamma(1), delta(1), epsilon(1). CF(0) has three main subunits: a, b and c.

It is found in the cell membrane. In terms of biological role, produces ATP from ADP in the presence of a proton gradient across the membrane. The gamma chain is believed to be important in regulating ATPase activity and the flow of protons through the CF(0) complex. This chain is ATP synthase gamma chain, found in Pseudarthrobacter chlorophenolicus (strain ATCC 700700 / DSM 12829 / CIP 107037 / JCM 12360 / KCTC 9906 / NCIMB 13794 / A6) (Arthrobacter chlorophenolicus).